The sequence spans 184 residues: Elongation factor P (184 aa).

The protein belongs to the elongation factor P family.

Its subcellular location is the cytoplasm. Its pathway is protein biosynthesis; polypeptide chain elongation. Its function is as follows. Involved in peptide bond synthesis. Stimulates efficient translation and peptide-bond synthesis on native or reconstituted 70S ribosomes in vitro. Probably functions indirectly by altering the affinity of the ribosome for aminoacyl-tRNA, thus increasing their reactivity as acceptors for peptidyl transferase. The chain is Elongation factor P from Delftia acidovorans (strain DSM 14801 / SPH-1).